A 461-amino-acid polypeptide reads, in one-letter code: Adenine DNA glycosylase (461 aa).

E69 functions as the Proton donor/acceptor in the catalytic mechanism. Positions 226, 233, 236, and 242 each coordinate [4Fe-4S] cluster. Residues 296–437 (QREERALVVI…RAALEIKKRK (142 aa)) enclose the Nudix hydrolase domain. A Nudix box motif is present at residues 340-366 (FGQESWPKDMDAEFQKSIAQWISNDSR).

Belongs to the Nth/MutY family. Monomer. The cofactor is [4Fe-4S] cluster.

It catalyses the reaction Hydrolyzes free adenine bases from 7,8-dihydro-8-oxoguanine:adenine mismatched double-stranded DNA, leaving an apurinic site.. Its function is as follows. Adenine glycosylase active on G-A mispairs. Has glycosylase and nicking activities and is active at A/G and A/GO sites. In Schizosaccharomyces pombe (strain 972 / ATCC 24843) (Fission yeast), this protein is Adenine DNA glycosylase (myh1).